The following is a 118-amino-acid chain: Large ribosomal subunit protein bL20 (118 aa).

It belongs to the bacterial ribosomal protein bL20 family.

In terms of biological role, binds directly to 23S ribosomal RNA and is necessary for the in vitro assembly process of the 50S ribosomal subunit. It is not involved in the protein synthesizing functions of that subunit. In Thermotoga maritima (strain ATCC 43589 / DSM 3109 / JCM 10099 / NBRC 100826 / MSB8), this protein is Large ribosomal subunit protein bL20 (rplT).